The sequence spans 424 residues: Serine incorporator 5 (424 aa).

Residues 1-6 lie on the Extracellular side of the membrane; sequence MYALYF. The helical transmembrane segment at 7 to 23 threads the bilayer; that stretch reads ILVVVLCCIMMSTTVAH. The Cytoplasmic segment spans residues 24–52; the sequence is KMKEHIPFFEDMCKGIKAGDTCEKLVGYS. A helical transmembrane segment spans residues 53–73; it reads AVYRVCFGMACFFFIFCLLTL. Residues 74-87 are Extracellular-facing; the sequence is KINNSKSCRAHIHN. N-linked (GlcNAc...) asparagine glycosylation occurs at Asn76. Residues 88–108 traverse the membrane as a helical segment; the sequence is GFWFFKLLLLGAMCSGAFFIP. Over 109–119 the chain is Cytoplasmic; that stretch reads DQDTFLNAWRY. The chain crosses the membrane as a helical span at residues 120 to 140; sequence VGAVGGFLFIGIQLLLLVEFA. The Extracellular portion of the chain corresponds to 141–161; the sequence is HKWNKNWTAGTASNKLWYASL. An N-linked (GlcNAc...) asparagine glycan is attached at Asn146. Residues 162–182 traverse the membrane as a helical segment; that stretch reads ALVTLIMYSIATGGLVLMAVF. Residues 183-193 lie on the Cytoplasmic side of the membrane; the sequence is YTQKDGCMENK. The helical transmembrane segment at 194–214 threads the bilayer; sequence ILLGVNGGLCVLISLVAISPC. At 215–221 the chain is on the extracellular side; that stretch reads VQNRQPH. Residues 222 to 242 traverse the membrane as a helical segment; the sequence is SGLLQSGVISCYVTYLTFSAL. Residues 243 to 274 are Cytoplasmic-facing; sequence SSKPAEVVLDEHGKNVTICVPDFGQDLYRDEN. Residues 275-295 form a helical membrane-spanning segment; that stretch reads LVTILGTSLLIGCILYSCLTS. The Extracellular portion of the chain corresponds to 296-348; it reads TTRSSSDALQGRYAAPELEIARCCFCFSPGGEDTEEQQQGKEGPRVIYDEKKG. Residues 349 to 369 traverse the membrane as a helical segment; it reads TVYIYSYFHFVFFLASLYVMM. Residues 370–391 are Cytoplasmic-facing; the sequence is TVTNWFNYESANIESFFSGSWS. A helical membrane pass occupies residues 392-412; it reads IFWVKMASCWICVLLYLCTLV. The Extracellular portion of the chain corresponds to 413–424; it reads APLCCPTREFSV.

This sequence belongs to the TDE1 family.

Its subcellular location is the cell membrane. It carries out the reaction a 1,2-diacyl-sn-glycero-3-phospho-L-serine(in) = a 1,2-diacyl-sn-glycero-3-phospho-L-serine(out). The enzyme catalyses a 1,2-diacyl-sn-glycero-3-phosphocholine(in) = a 1,2-diacyl-sn-glycero-3-phosphocholine(out). The catalysed reaction is a 1,2-diacyl-sn-glycero-3-phosphoethanolamine(in) = a 1,2-diacyl-sn-glycero-3-phosphoethanolamine(out). Functionally, restriction factor required to restrict infectivity of gammaretroviruses: acts by inhibiting an early step of viral infection. Impairs the penetration of the viral particle into the cytoplasm. Non-ATP-dependent, non-specific lipid transporter for phosphatidylserine, phosphatidylcholine, and phosphatidylethanolamine. Functions as a scramblase that flips lipids in both directions across the membrane. Phospholipid scrambling results in gammaretroviral surface exposure of phosphatidylserine and loss of membrane asymmetry, which leads to loss of infectivity. Enhances the incorporation of serine into phosphatidylserine and sphingolipids. May play a role in providing serine molecules for the formation of myelin glycosphingolipids in oligodendrocytes. This chain is Serine incorporator 5 (SERINC5), found in Macaca fascicularis (Crab-eating macaque).